The chain runs to 344 residues: F-box protein HRT3 (344 aa).

One copy of the TPR repeat lies at 14-47 (AIAIWEKGVLKEKDGSMSDAINFYRSALKIHDNV). The 51-residue stretch at 98–148 (WILEILPDDILLRIIKKVILMSGESWVNLSMTCSTFSKLCFHDSVPFKTFA) folds into the F-box domain.

Interacts with SKP1. Component of the probable SCF(HRT3) complex containing CDC53, SKP1, RBX1 and HRT3.

It functions in the pathway protein modification; protein ubiquitination. Functionally, substrate recognition component of a SCF (SKP1-CUL1-F-box protein) E3 ubiquitin-protein ligase complex which mediates the ubiquitination and subsequent proteasomal degradation of target proteins. Probably recognizes and binds to phosphorylated target proteins. The protein is F-box protein HRT3 (HRT3) of Saccharomyces cerevisiae (strain ATCC 204508 / S288c) (Baker's yeast).